The sequence spans 308 residues: Aldo-keto reductase AKR2E4 (308 aa).

NADP(+) is bound by residues 22 to 29 (GTGRGTAK) and Asp53. The Proton donor role is filled by Tyr58. Residues 158 to 159 (SN), Arg215, and 259 to 269 (KSTNKQRIAQN) contribute to the NADP(+) site.

It belongs to the short-chain dehydrogenases/reductases (SDR) family. In terms of tissue distribution, detected in hemolymph (at protein level). Detected in larval ovary.

Its activity is regulated as follows. Subject to substrate inhibition by high levels of 3-dehydroecdysone. Functionally, NADP-dependent oxidoreductase with high 3-dehydroecdysone reductase activity. May play a role in the regulation of molting. Has lower activity with phenylglyoxal and isatin (in vitro). Has no activity with NADH as cosubstrate. Has no activity with nitrobenzaldehyde and 3-hydroxybenzaldehyde. The sequence is that of Aldo-keto reductase AKR2E4 (akr2e) from Bombyx mori (Silk moth).